The primary structure comprises 140 residues: Beta/delta-urticatoxin-De2a (140 aa).

Positions 1–18 (MKTSTALVLLLALTATSA) are cleaved as a signal peptide. A propeptide spanning residues 19–78 (SSGDHQFIDEQNIMNVAEGKNVISSLSSSGGGDDAAAIMESVLVNGGNRKMVFMMVSGSQ) is cleaved from the precursor. Disulfide bonds link Cys81–Cys95, Cys88–Cys100, Cys94–Cys108, Cys113–Cys127, Cys120–Cys131, and Cys126–Cys139.

It belongs to the urticatoxin-2 family. In terms of tissue distribution, expressed in trichomes, that are stiff epidermal hairs located on the surface of petioles and leaves.

It localises to the secreted. Plant defense neurotoxin that causes pain and systemic symptoms in mammals via modulation of voltage-gated sodium channels (Nav). Potent modulator of human Nav1.5/SCN5A (EC(50)=55 nM), Nav1.6/SCN8A (EC(50)=0.86 nM), and Nav1.7/SCN9A (EC(50)=208 nM), where it shifts the activation threshold to more negative potentials and delays fast inactivation. Also shifts the voltage-dependence of steady-state fast inactivation of Nav1.6/SCN8A, but not that of Nav1.5/SCN5A or Nav1.7/SCN9A. On Nav1.7/SCN9A, principally acts by binding to extracellular loops of domain IV (Nav site 3). In vivo, intraplantar injection into mice causes numerous dose-dependent, immediate, and long-lasting spontaneous pain behaviors, while no swelling is observed in the injected paw. At the highest doses tested, systemic symptoms including hypokinesia and hypersalivation are observed. The sequence is that of Beta/delta-urticatoxin-De2a from Dendrocnide excelsa (Giant stinging tree).